Here is a 294-residue protein sequence, read N- to C-terminus: MAGMKEIRGKIKSVQNTRKITKAMEMVAASKMRRAQERMRAARPYADKVRDIAAHMSRANPEYRHPFMVSNEGAKTAGIILVTTDKGLCGGMNTNVLRASLQKFKELEGQGKTIEATAIGTKGLGFLNRLRAKVVSNVVHLGDTPHLEKLIGAVKVQLDLYSEGKVSAVYLAYTRFVNTMKQEPVIEQLLPLSADQFERKEEDGTTPSTQWDYIYEPDAQAVVDELLVRYVEALVYQAVAENMASEQSARMVAMKAASDNAKTVINELQLVYNKSRQAAITKELSEIVGGAAAV.

The protein belongs to the ATPase gamma chain family. In terms of assembly, F-type ATPases have 2 components, CF(1) - the catalytic core - and CF(0) - the membrane proton channel. CF(1) has five subunits: alpha(3), beta(3), gamma(1), delta(1), epsilon(1). CF(0) has three main subunits: a, b and c.

The protein localises to the cell inner membrane. In terms of biological role, produces ATP from ADP in the presence of a proton gradient across the membrane. The gamma chain is believed to be important in regulating ATPase activity and the flow of protons through the CF(0) complex. This chain is ATP synthase gamma chain, found in Paraburkholderia xenovorans (strain LB400).